The sequence spans 286 residues: Aquaporin PIP2-4 (286 aa).

2 consecutive transmembrane segments (helical) span residues 40–60 (ALIA…ATVI) and 77–97 (CGGV…FILV). Residues 109 to 111 (NPA) carry the NPA 1 motif. A run of 3 helical transmembrane segments spans residues 128-148 (LLYM…VKGF), 170-190 (GTGL…VFSA), and 204-224 (VLAP…TIPI). The NPA 2 signature appears at 230 to 232 (NPA). Residues 252–272 (IFWVGPFIGAAIAALYHQVIL) traverse the membrane as a helical segment.

The protein belongs to the MIP/aquaporin (TC 1.A.8) family. PIP (TC 1.A.8.11) subfamily. As to expression, expressed in roots.

The protein resides in the cell membrane. In terms of biological role, water channel required to facilitate the transport of water across cell membrane. May play a role in root water uptake. The protein is Aquaporin PIP2-4 (PIP2-4) of Oryza sativa subsp. japonica (Rice).